Here is a 372-residue protein sequence, read N- to C-terminus: Non-structural protein NS2 (372 aa).

The interval 259–326 is disordered; it reads NQIEKQHTTH…QESEPESPSF (68 aa). The segment covering 299 to 309 has biased composition (low complexity); sequence TETTSTSSSHH.

This chain is Non-structural protein NS2 (NS), found in Aedes albopictus (Asian tiger mosquito).